The following is a 162-amino-acid chain: Auxin-responsive protein SAUR36 (162 aa).

This sequence belongs to the ARG7 family. As to expression, expressed in embryo, endosperm, growing hypocotyls and shoot apical meristems.

Functionally, acts a positive regulator of leaf senescence and may mediate auxin-induced leaf senescence. Plays a role in the regulation of seed germination by gibberellins and abscisic acid (ABA). Plays a role in the regulation of light-dependent hypocotyl elongation. This chain is Auxin-responsive protein SAUR36, found in Arabidopsis thaliana (Mouse-ear cress).